The following is a 291-amino-acid chain: Protein CMSS1 (291 aa).

Residues 1–96 (MADDLGDEWW…KKTITDVLTS (96 aa)) are disordered. Positions 17–27 (DVPEVEEETEH) are enriched in acidic residues. Residues 58–79 (VKKECFITQERSEEKPDNESNK) are compositionally biased toward basic and acidic residues.

Belongs to the CMS1 family.

The chain is Protein CMSS1 (cmss1) from Danio rerio (Zebrafish).